We begin with the raw amino-acid sequence, 381 residues long: Alkanesulfonate monooxygenase (381 aa).

It belongs to the SsuD family. As to quaternary structure, homotetramer.

It catalyses the reaction an alkanesulfonate + FMNH2 + O2 = an aldehyde + FMN + sulfite + H2O + 2 H(+). Catalyzes the desulfonation of aliphatic sulfonates. This chain is Alkanesulfonate monooxygenase, found in Enterobacter sp. (strain 638).